A 170-amino-acid polypeptide reads, in one-letter code: Aspartate 1-decarboxylase (170 aa).

Ser25 functions as the Schiff-base intermediate with substrate; via pyruvic acid in the catalytic mechanism. Residue Ser25 is modified to Pyruvic acid (Ser). Thr57 contributes to the substrate binding site. The active-site Proton donor is the Tyr58. Residue 73–75 coordinates substrate; that stretch reads GAA. Residues 118 to 170 form a disordered region; that stretch reads GHDPAEALPDDPSSLRGDLAVPGNPVTAAARRGTPTHQAPVALPASRTVVAPR.

The protein belongs to the PanD family. As to quaternary structure, heterooctamer of four alpha and four beta subunits. Pyruvate serves as cofactor. Is synthesized initially as an inactive proenzyme, which is activated by self-cleavage at a specific serine bond to produce a beta-subunit with a hydroxyl group at its C-terminus and an alpha-subunit with a pyruvoyl group at its N-terminus.

It is found in the cytoplasm. It catalyses the reaction L-aspartate + H(+) = beta-alanine + CO2. It participates in cofactor biosynthesis; (R)-pantothenate biosynthesis; beta-alanine from L-aspartate: step 1/1. Catalyzes the pyruvoyl-dependent decarboxylation of aspartate to produce beta-alanine. The polypeptide is Aspartate 1-decarboxylase (Frankia alni (strain DSM 45986 / CECT 9034 / ACN14a)).